The sequence spans 335 residues: Anthranilate phosphoribosyltransferase (335 aa).

5-phospho-alpha-D-ribose 1-diphosphate contacts are provided by residues G79, 82 to 83 (GD), T87, 89 to 92 (NIST), 107 to 115 (KHGSRSVSS), and S119. An anthranilate-binding site is contributed by G79. S91 contacts Mg(2+). R165 contributes to the anthranilate binding site. Mg(2+)-binding residues include D223 and E224.

The protein belongs to the anthranilate phosphoribosyltransferase family. Homodimer. The cofactor is Mg(2+).

It carries out the reaction N-(5-phospho-beta-D-ribosyl)anthranilate + diphosphate = 5-phospho-alpha-D-ribose 1-diphosphate + anthranilate. The protein operates within amino-acid biosynthesis; L-tryptophan biosynthesis; L-tryptophan from chorismate: step 2/5. Catalyzes the transfer of the phosphoribosyl group of 5-phosphorylribose-1-pyrophosphate (PRPP) to anthranilate to yield N-(5'-phosphoribosyl)-anthranilate (PRA). The sequence is that of Anthranilate phosphoribosyltransferase from Helicobacter pylori (strain G27).